We begin with the raw amino-acid sequence, 256 residues long: Small ribosomal subunit protein eS1 (256 aa).

At Ala2 the chain carries N-acetylalanine; partial.

It belongs to the eukaryotic ribosomal protein eS1 family. Component of the small ribosomal subunit. Mature ribosomes consist of a small (40S) and a large (60S) subunit. The 40S subunit contains about 33 different proteins and 1 molecule of RNA (18S). The 60S subunit contains about 49 different proteins and 3 molecules of RNA (25S, 5.8S and 5S).

It localises to the cytoplasm. This is Small ribosomal subunit protein eS1 from Eremothecium gossypii (strain ATCC 10895 / CBS 109.51 / FGSC 9923 / NRRL Y-1056) (Yeast).